Consider the following 238-residue polypeptide: Uridylate kinase (238 aa).

12-15 (KLSG) is an ATP binding site. Position 54 (Gly54) interacts with UMP. Residues Gly55 and Arg59 each coordinate ATP. UMP is bound by residues Asp74 and 135-142 (TGNPYFST). The ATP site is built by Tyr168 and Asp171.

It belongs to the UMP kinase family. Homohexamer.

The protein localises to the cytoplasm. It catalyses the reaction UMP + ATP = UDP + ADP. It participates in pyrimidine metabolism; CTP biosynthesis via de novo pathway; UDP from UMP (UMPK route): step 1/1. Its activity is regulated as follows. Inhibited by UTP. In terms of biological role, catalyzes the reversible phosphorylation of UMP to UDP. The chain is Uridylate kinase from Syntrophomonas wolfei subsp. wolfei (strain DSM 2245B / Goettingen).